Reading from the N-terminus, the 527-residue chain is GMP synthase [glutamine-hydrolyzing] (527 aa).

A Glutamine amidotransferase type-1 domain is found at 4–202; sequence KILILDFGSQ…VLKICGAKPD (199 aa). C81 (nucleophile) is an active-site residue. Residues H176 and E178 contribute to the active site. The GMPS ATP-PPase domain occupies 203-395; that stretch reads WEMGNYIDEA…LGLPPSMVYR (193 aa). 230–236 provides a ligand contact to ATP; sequence SGGVDSS.

As to quaternary structure, homodimer.

The enzyme catalyses XMP + L-glutamine + ATP + H2O = GMP + L-glutamate + AMP + diphosphate + 2 H(+). It participates in purine metabolism; GMP biosynthesis; GMP from XMP (L-Gln route): step 1/1. Catalyzes the synthesis of GMP from XMP. In Paraburkholderia phymatum (strain DSM 17167 / CIP 108236 / LMG 21445 / STM815) (Burkholderia phymatum), this protein is GMP synthase [glutamine-hydrolyzing].